The primary structure comprises 549 residues: Glucose-6-phosphate isomerase (549 aa).

The active-site Proton donor is the Glu-355. Active-site residues include His-387 and Lys-515.

The protein belongs to the GPI family.

It localises to the cytoplasm. The enzyme catalyses alpha-D-glucose 6-phosphate = beta-D-fructose 6-phosphate. The protein operates within carbohydrate biosynthesis; gluconeogenesis. It participates in carbohydrate degradation; glycolysis; D-glyceraldehyde 3-phosphate and glycerone phosphate from D-glucose: step 2/4. In terms of biological role, catalyzes the reversible isomerization of glucose-6-phosphate to fructose-6-phosphate. This is Glucose-6-phosphate isomerase from Haemophilus influenzae (strain ATCC 51907 / DSM 11121 / KW20 / Rd).